Reading from the N-terminus, the 302-residue chain is Putative fructose-bisphosphate aldolase (302 aa).

Residue aspartate 86 is the Proton donor of the active site. Zn(2+) is bound by residues histidine 87, aspartate 116, glutamate 146, and histidine 192. Residue glycine 193 participates in dihydroxyacetone phosphate binding. Residue histidine 223 coordinates Zn(2+). Dihydroxyacetone phosphate-binding positions include glycine 224 to aspartate 226 and asparagine 245 to arginine 248.

The protein belongs to the class II fructose-bisphosphate aldolase family. As to quaternary structure, homodimer. Requires Zn(2+) as cofactor.

The catalysed reaction is beta-D-fructose 1,6-bisphosphate = D-glyceraldehyde 3-phosphate + dihydroxyacetone phosphate. Its pathway is carbohydrate degradation; glycolysis; D-glyceraldehyde 3-phosphate and glycerone phosphate from D-glucose: step 4/4. Its function is as follows. Catalyzes the aldol condensation of dihydroxyacetone phosphate (DHAP or glycerone-phosphate) with glyceraldehyde 3-phosphate (G3P) to form fructose 1,6-bisphosphate (FBP) in gluconeogenesis and the reverse reaction in glycolysis. The sequence is that of Putative fructose-bisphosphate aldolase from Coccidioides immitis (strain RS) (Valley fever fungus).